The chain runs to 393 residues: Ribonucleoside-diphosphate reductase subunit M2 (393 aa).

Residue S18 is modified to Phosphoserine. Positions 142, 173, and 176 each coordinate Fe cation. Residue Y180 is part of the active site. Positions 236, 270, and 273 each coordinate Fe cation.

It belongs to the ribonucleoside diphosphate reductase small chain family. Heterodimer of a large and a small subunit. It depends on Fe cation as a cofactor.

Its subcellular location is the cytoplasm. It carries out the reaction a 2'-deoxyribonucleoside 5'-diphosphate + [thioredoxin]-disulfide + H2O = a ribonucleoside 5'-diphosphate + [thioredoxin]-dithiol. Its function is as follows. Provides the precursors necessary for DNA synthesis. Catalyzes the biosynthesis of deoxyribonucleotides from the corresponding ribonucleotides. In Drosophila melanogaster (Fruit fly), this protein is Ribonucleoside-diphosphate reductase subunit M2 (RnrS).